Consider the following 270-residue polypeptide: Phospholysine phosphohistidine inorganic pyrophosphate phosphatase (270 aa).

Mg(2+) is bound by residues Asp17 and Ser19. Substrate contacts are provided by residues 17-19, 54-55, and Lys189; these read DIS and TN. Residue Asp214 participates in Mg(2+) binding.

Belongs to the HAD-like hydrolase superfamily. Homodimer. Requires Mg(2+) as cofactor.

Its subcellular location is the cytoplasm. It localises to the nucleus. The enzyme catalyses diphosphate + H2O = 2 phosphate + H(+). Its function is as follows. Phosphatase that hydrolyzes imidodiphosphate, 3-phosphohistidine and 6-phospholysine. Has broad substrate specificity and can also hydrolyze inorganic diphosphate, but with lower efficiency. The polypeptide is Phospholysine phosphohistidine inorganic pyrophosphate phosphatase (Lhpp) (Mus musculus (Mouse)).